We begin with the raw amino-acid sequence, 144 residues long: Granulocyte-macrophage colony-stimulating factor (144 aa).

The first 17 residues, 1–17, serve as a signal peptide directing secretion; the sequence is MWLQSLLLLGTVACSIS. 3 O-linked (GalNAc...) serine glycosylation sites follow: serine 22, serine 24, and serine 26. Residue threonine 27 is glycosylated (O-linked (GalNAc...) threonine; partial). N-linked (GlcNAc...) asparagine glycosylation is found at asparagine 44 and asparagine 54. Disulfide bonds link cysteine 71/cysteine 113 and cysteine 105/cysteine 138.

Belongs to the GM-CSF family. As to quaternary structure, monomer. The signaling GM-CSF receptor complex is a dodecamer of two head-to-head hexamers of two alpha, two beta, and two ligand subunits.

It localises to the secreted. Cytokine that stimulates the growth and differentiation of hematopoietic precursor cells from various lineages, including granulocytes, macrophages, eosinophils and erythrocytes. The sequence is that of Granulocyte-macrophage colony-stimulating factor (CSF2) from Homo sapiens (Human).